Here is a 195-residue protein sequence, read N- to C-terminus: Large ribosomal subunit protein bL17 (195 aa).

The disordered stretch occupies residues 125–195 (ANRARRVGAS…PTQDSDADKS (71 aa)). Low complexity predominate over residues 136–152 (QTAPVAAAAAPQAAVEP). 2 stretches are compositionally biased toward acidic residues: residues 153 to 173 (EATE…EDTT) and 183 to 195 (TDDP…ADKS).

The protein belongs to the bacterial ribosomal protein bL17 family. As to quaternary structure, part of the 50S ribosomal subunit. Contacts protein L32.

The sequence is that of Large ribosomal subunit protein bL17 from Mycobacterium sp. (strain JLS).